A 442-amino-acid chain; its full sequence is MKPGPPRRGTAQGQRVDTATHGPGARGLLLPPLLLLLLAGRAAGAQRWRNENFERPVDLEGSGDDDSFPDDELDDLYSGSGSGYFEQESGLETAMRFIPDIALAAPTAPAMLPTTVIQPVDTPFEELLSEHPGPEPVTSPPLVTEVTEVVEEPSQRATTISTTTSTTAATTTGAPTMATAPATAATTAPSTPAAPPATATTADIRTTGIQGLLPLPLTTAATAKATTPAVPSPPTTVTTLDTEAPTPRLVNTATSRPRALPRPVTTQEPEVAERSTLPLGTTAPGPTEVAQTPTPESLLTTTQDEPEVPVSGGPSGDFELQEETTQPDTANEVVAVEGAAAKPSPPLGTLPKGARPGLGLHDNAIDSGSSAAQLPQKSILERKEVLVAVIVGGVVGALFAAFLVTLLIYRMKKKDEGSYTLEEPKQASVTYQKPDKQEEFYA.

Disordered regions lie at residues 1–25 (MKPGPPRRGTAQGQRVDTATHGPGA) and 55–85 (RPVDLEGSGDDDSFPDDELDDLYSGSGSGYF). An N-terminal signal peptide occupies residues 1–44 (MKPGPPRRGTAQGQRVDTATHGPGARGLLLPPLLLLLLAGRAAG). Residues 45–387 (AQRWRNENFE…SILERKEVLV (343 aa)) lie on the Extracellular side of the membrane. Positions 61–75 (GSGDDDSFPDDELDD) are enriched in acidic residues. Residues Ser78, Ser80, Ser82, and Ser89 are each glycosylated (O-linked (Xyl...) (glycosaminoglycan) serine). The O-linked (GalNAc) threonine; by GALNT13 glycan is linked to Thr107. 5 disordered regions span residues 151–175 (EEPSQRATTISTTTSTTAATTTGAP), 180–199 (APATAATTAPSTPAAPPATA), 225–244 (ATTPAVPSPPTTVTTLDTEA), 252–327 (TATS…TTQP), and 339–372 (AAAKPSPPLGTLPKGARPGLGLHDNAIDSGSSAA). The segment covering 157 to 175 (ATTISTTTSTTAATTTGAP) has biased composition (low complexity). Ser161 carries O-linked (GalNAc) serine; by GALNT13 glycosylation. O-linked (GalNAc) threonine; by GALNT13 glycans are attached at residues Thr162, Thr163, Thr170, and Thr172. Residues 276–287 (TLPLGTTAPGPT) show a composition bias toward low complexity. Residues 289-303 (VAQTPTPESLLTTTQ) show a composition bias toward polar residues. O-linked (Xyl...) (glycosaminoglycan) serine glycans are attached at residues Ser315 and Ser367. A helical membrane pass occupies residues 388–408 (AVIVGGVVGALFAAFLVTLLI). Residues Tyr409, Tyr419, Tyr431, and Tyr441 each carry the phosphotyrosine modification. Residues 409–442 (YRMKKKDEGSYTLEEPKQASVTYQKPDKQEEFYA) lie on the Cytoplasmic side of the membrane. The segment at 419–442 (YTLEEPKQASVTYQKPDKQEEFYA) is disordered. Over residues 433 to 442 (KPDKQEEFYA) the composition is skewed to basic and acidic residues.

The protein belongs to the syndecan proteoglycan family. In terms of assembly, interacts with TIAM1. Interacts (via heparan sulfate chains) with PTN; this interaction mediates the neurite outgrowth-promoting signal from PTN to the cytoskeleton of growing neurites; this interaction mediates osteoblast recruitment. Interacts with MDK; this interaction induces SDC3 clustering; this interaction induces neuronal cell adhesion and neurite outgrowth. Post-translationally, O-glycosylated within the Thr/Ser-rich region which could interact with lectin domains on other molecules. In terms of tissue distribution, high levels in neonatal brain, heart, and Schwann cells, barely detectable in neonatal or adult liver, or adult brain.

The protein resides in the cell membrane. Cell surface proteoglycan that may bear heparan sulfate. May have a role in the organization of cell shape by affecting the actin cytoskeleton, possibly by transferring signals from the cell surface in a sugar-dependent mechanism. This Rattus norvegicus (Rat) protein is Syndecan-3 (Sdc3).